A 1639-amino-acid polypeptide reads, in one-letter code: RIMS-binding protein 3B (1639 aa).

Disordered stretches follow at residues 1-22, 215-240, and 295-364; these read MAKD…SSPA, GSPD…CHAP, and SLDS…LTPS. The stretch at 21 to 143 forms a coiled coil; that stretch reads PAAAVLENQR…ELQRQLAEEL (123 aa). Residues 326-339 are compositionally biased toward pro residues; that stretch reads SPPPSPLPPPPPPS. 2 coiled-coil regions span residues 409–442 and 480–619; these read QADE…QETN and LAKD…AEEN. Residues 697–811 are disordered; it reads CRPGHPPEQP…DRDTASEVDD (115 aa). Polar residues-rich tracts occupy residues 707-718 and 761-775; these read WETSQMPESQVK and SVPQ…SQPL. A compositionally biased stretch (low complexity) spans 776 to 790; that stretch reads SKKTSSQSNSSSEGS. One can recognise an SH3 1 domain in the interval 832–899; the sequence is PKLKIFMAQY…PSNFVEQIPD (68 aa). 2 consecutive Fibronectin type-III domains span residues 995–1083 and 1088–1184; these read APMQ…TLLA and PPLE…IPED. 3 disordered regions span residues 1251–1273, 1292–1325, and 1392–1413; these read PRRQ…GAGS, QKSP…SPAP, and GTER…QALG. A compositionally biased stretch (polar residues) spans 1293-1305; the sequence is KSPQNHRPPSVSD. A compositionally biased stretch (basic and acidic residues) spans 1392-1406; sequence GTERREERREPEPHS. SH3 domains follow at residues 1452–1520 and 1569–1636; these read TPAR…EMEV and WTPK…HMSL.

This sequence belongs to the RIMBP family. In terms of assembly, interacts with LRGUK (via guanylate kinase-like domain). Interacts (via C-terminus) with HOOK1 (via coiled-coil region).

The protein localises to the cytoplasm. It localises to the cytoskeleton. Functionally, probable component of the manchette, a microtubule-based structure which plays a key role in sperm head morphogenesis during late stages of sperm development. In Homo sapiens (Human), this protein is RIMS-binding protein 3B (RIMBP3B).